The sequence spans 101 residues: Small ribosomal subunit protein uS14 (101 aa).

It belongs to the universal ribosomal protein uS14 family. Part of the 30S ribosomal subunit. Contacts proteins S3 and S10.

Functionally, binds 16S rRNA, required for the assembly of 30S particles and may also be responsible for determining the conformation of the 16S rRNA at the A site. This chain is Small ribosomal subunit protein uS14, found in Synechococcus sp. (strain JA-3-3Ab) (Cyanobacteria bacterium Yellowstone A-Prime).